Here is a 434-residue protein sequence, read N- to C-terminus: Neuropeptide receptor 22 (434 aa).

Topologically, residues Met1–Leu55 are extracellular. A helical transmembrane segment spans residues Phe56–Val76. Residues Tyr77 to Asn86 are Cytoplasmic-facing. Residues Ile87 to Ser107 traverse the membrane as a helical segment. Residues Tyr108–Leu128 lie on the Extracellular side of the membrane. Cys126 and Cys204 form a disulfide bridge. Residues Leu129–Phe149 form a helical membrane-spanning segment. At Asp150–Arg169 the chain is on the cytoplasmic side. Residues Ala170–Phe190 traverse the membrane as a helical segment. Over Thr191–Val226 the chain is Extracellular. An N-linked (GlcNAc...) asparagine glycan is attached at Asn207. Residues Leu227–Ile247 traverse the membrane as a helical segment. At Lys248–Val277 the chain is on the cytoplasmic side. A helical transmembrane segment spans residues Pro278–Ile298. The Extracellular segment spans residues Asn299–Ser310. Residues Trp311 to Val331 form a helical membrane-spanning segment. Over Asn332–Ala434 the chain is Cytoplasmic.

This sequence belongs to the G-protein coupled receptor 1 family. In terms of tissue distribution, expressed in many cells, mainly in the head region, with expression detected in the head muscles, I2 neurons, MC neurons, RIH neuron, AIA neurons, AUA neurons, ASK neurons, ASI neurons, a few B-type motorneurons in the posterior ventral nerve cord, pharyngeal muscles, body wall muscles, the intestine and a few classes of unidentified cells anterior to the nerve ring. Expression in the MC neurons is important to mediate suppression of feeding while expression in the RIH neuron is important for the facilitation of egg-laying. No expression detected in other tissues including hypodermis.

The protein resides in the cell membrane. Functionally, receptor for the LURY-1-1 and LURY-1-2 peptides which control food-related processes including feeding, lifespan, egg-laying and roaming behavior. Receptor for flp-7 which stimulates serotonin-induced fat loss. Serotonin induces secretion of flp-7 from neurons and binding to npr-22 which leads to induction of the atgp-1 lipase and subsequent fat loss. Acts in vitro as a receptor for the flp-7 FMRFamide-like neuropeptides TPMQRSSMVRF-amide, SPMQRSSMVRF-amide, SPMERSAMVRF-amide and SPMDRSKMVRF-amide. Also acts in vitro as a receptor for a number of other FMRFamide-like neuropeptides including the flp-1 neuropeptide PNFMRY-amide, the flp-9 neuropeptide KPSFVRF-amide, the flp-11 neuropeptides AMRNALVRF-amide, ASGGMRNALVRF-amide and NGAPQPFVRF-amide, the flp-13 neuropeptides AADGAPLIRF-amide, ASPSAPLIRF-amide, SPSAVPLIRF-amide, SAAAPLIRF-amide and ASSAPLIRF-amide, and the flp-22 neuropeptide SPSAKWMRF-amide. The SPMERSAMVRF-amide neuropeptide from flp-7 acts as the strongest in vitro activator of npr-22. This Caenorhabditis elegans protein is Neuropeptide receptor 22.